The sequence spans 528 residues: Biotin carboxylase 1, chloroplastic (528 aa).

The transit peptide at 1-51 directs the protein to the chloroplast; it reads MEATLPVCKSVTSTPGLFMGKTSGIRSSQCSFMMGNKVNFPRQRAQTAHVH. Residues lysine 179, lysine 221, 227–228, 263–266, and histidine 271 contribute to the ATP site; these read GG and EKYV. An ATP-grasp domain is found at 183 to 380; sequence RETMKKAGVP…LIEEQIRVAM (198 aa). Lysine 300 is a hydrogencarbonate binding site. Glutamate 338 and glutamate 351 together coordinate ATP. Mg(2+) contacts are provided by glutamate 338, glutamate 351, and asparagine 353. Mn(2+)-binding residues include glutamate 338, glutamate 351, and asparagine 353. The hydrogencarbonate site is built by arginine 355, valine 358, and arginine 401. Residue arginine 355 is part of the active site. A biotin-binding site is contributed by arginine 401.

As to quaternary structure, acetyl-CoA carboxylase is a heterohexamer composed of biotin carboxyl carrier protein, biotin carboxylase and two subunits each of ACCase subunit alpha and ACCase plastid-coded subunit beta (accD). The cofactor is Mg(2+). Mn(2+) is required as a cofactor.

The protein resides in the plastid. It is found in the chloroplast. The catalysed reaction is N(6)-biotinyl-L-lysyl-[protein] + hydrogencarbonate + ATP = N(6)-carboxybiotinyl-L-lysyl-[protein] + ADP + phosphate + H(+). The protein operates within lipid metabolism; malonyl-CoA biosynthesis; malonyl-CoA from acetyl-CoA: step 1/1. In terms of biological role, this protein is a component of the acetyl coenzyme A carboxylase complex; first, biotin carboxylase catalyzes the carboxylation of the carrier protein and then the transcarboxylase transfers the carboxyl group to form malonyl-CoA. The protein is Biotin carboxylase 1, chloroplastic of Populus trichocarpa (Western balsam poplar).